Reading from the N-terminus, the 300-residue chain is Nicotinate-nucleotide pyrophosphorylase [carboxylating] (300 aa).

Positions 5 to 9 (QLLPK) are important for hexamer formation. Quinolinate contacts are provided by residues R107, 150 to 151 (RK), 172 to 173 (HR), K183, E213, D234, 260 to 262 (SGG), and G282.

It belongs to the NadC/ModD family. Hexamer formed by 3 homodimers.

The enzyme catalyses nicotinate beta-D-ribonucleotide + CO2 + diphosphate = quinolinate + 5-phospho-alpha-D-ribose 1-diphosphate + 2 H(+). It functions in the pathway cofactor biosynthesis; NAD(+) biosynthesis; nicotinate D-ribonucleotide from quinolinate: step 1/1. In terms of biological role, involved in the catabolism of quinolinic acid (QA). The chain is Nicotinate-nucleotide pyrophosphorylase [carboxylating] (qprt) from Dictyostelium discoideum (Social amoeba).